Here is a 344-residue protein sequence, read N- to C-terminus: Glycerol-3-phosphate dehydrogenase [NAD(P)+] (344 aa).

Positions 11, 31, 32, and 105 each coordinate NADPH. Residues Lys105, Gly133, and Ser135 each contribute to the sn-glycerol 3-phosphate site. Residue Ala137 participates in NADPH binding. Residues Lys188, Asp241, Ser251, Arg252, and Asn253 each contribute to the sn-glycerol 3-phosphate site. The Proton acceptor role is filled by Lys188. An NADPH-binding site is contributed by Arg252. Position 278 (Glu278) interacts with NADPH.

It belongs to the NAD-dependent glycerol-3-phosphate dehydrogenase family.

Its subcellular location is the cytoplasm. It catalyses the reaction sn-glycerol 3-phosphate + NAD(+) = dihydroxyacetone phosphate + NADH + H(+). It carries out the reaction sn-glycerol 3-phosphate + NADP(+) = dihydroxyacetone phosphate + NADPH + H(+). Its pathway is membrane lipid metabolism; glycerophospholipid metabolism. Its function is as follows. Catalyzes the reduction of the glycolytic intermediate dihydroxyacetone phosphate (DHAP) to sn-glycerol 3-phosphate (G3P), the key precursor for phospholipid synthesis. The sequence is that of Glycerol-3-phosphate dehydrogenase [NAD(P)+] from Acidithiobacillus ferrooxidans (strain ATCC 23270 / DSM 14882 / CIP 104768 / NCIMB 8455) (Ferrobacillus ferrooxidans (strain ATCC 23270)).